The sequence spans 221 residues: Riboflavin kinase (221 aa).

The H-T-H motif-like stretch occupies residues 1 to 89 (MENIYIALKT…ISSILRFSQE (89 aa)). A riboflavin kinase region spans residues 90–221 (LKLVGAVQDG…EVLASIDGKL (132 aa)). 99–104 (GLGEGK) is a binding site for CDP. Residues threonine 128 and asparagine 130 each contribute to the Mg(2+) site. FMN contacts are provided by serine 185 and glutamate 192. 197-200 (KYLR) contributes to the CDP binding site.

It belongs to the archaeal riboflavin kinase family. It depends on Mg(2+) as a cofactor.

It catalyses the reaction riboflavin + CTP = CDP + FMN + H(+). It functions in the pathway cofactor biosynthesis; FMN biosynthesis; FMN from riboflavin (CTP route): step 1/1. In terms of biological role, catalyzes the CTP-dependent phosphorylation of riboflavin (vitamin B2) to form flavin mononucleotide (FMN). The protein is Riboflavin kinase (ribK) of Picrophilus torridus (strain ATCC 700027 / DSM 9790 / JCM 10055 / NBRC 100828 / KAW 2/3).